A 99-amino-acid polypeptide reads, in one-letter code: UPF0213 protein YazA (99 aa).

The region spanning 4–79 (NNHFFYVVKC…KKLTRKKKEL (76 aa)) is the GIY-YIG domain.

This sequence belongs to the UPF0213 family.

The protein is UPF0213 protein YazA (yazA) of Bacillus subtilis (strain 168).